The chain runs to 360 residues: Aminomethyltransferase (360 aa).

Belongs to the GcvT family. In terms of assembly, the glycine cleavage system is composed of four proteins: P, T, L and H.

It carries out the reaction N(6)-[(R)-S(8)-aminomethyldihydrolipoyl]-L-lysyl-[protein] + (6S)-5,6,7,8-tetrahydrofolate = N(6)-[(R)-dihydrolipoyl]-L-lysyl-[protein] + (6R)-5,10-methylene-5,6,7,8-tetrahydrofolate + NH4(+). In terms of biological role, the glycine cleavage system catalyzes the degradation of glycine. This chain is Aminomethyltransferase, found in Methylococcus capsulatus (strain ATCC 33009 / NCIMB 11132 / Bath).